Here is a 132-residue protein sequence, read N- to C-terminus: MDSRTGENITAHQAENSVFIWEVPNPLYFKIMRVEDPAYTRTRIYHIQVRFNHNLRKALDLHKAFLNFQVWTTSIQASGTTYLNRFRLLVLLYLHRLGVIGINNVIRAVQFATNKSYVNTVLENHDIKYKFY.

This sequence belongs to the geminiviridae replication enhancer protein family. In terms of assembly, homooligomer. Interacts with the replication-associated protein (REP). Interacts with host proliferating cell nuclear antigen (PCNA). Interacts with host retinoblastoma-related protein 1 (RBR1), and may thereby deregulate the host cell cycle. Oligomerization and interaction with PCNA are necessary for optimal replication enhancement.

In terms of biological role, increases viral DNA accumulation. Enhances infectivity and symptom expression. The polypeptide is Replication enhancer protein (Macroptilium lathyroides (Lima bean)).